Reading from the N-terminus, the 363-residue chain is Alanine racemase (363 aa).

K34 serves as the catalytic Proton acceptor; specific for D-alanine. Position 34 is an N6-(pyridoxal phosphate)lysine (K34). Substrate is bound at residue R129. The active-site Proton acceptor; specific for L-alanine is Y256. M304 is a binding site for substrate.

Belongs to the alanine racemase family. It depends on pyridoxal 5'-phosphate as a cofactor.

It catalyses the reaction L-alanine = D-alanine. It functions in the pathway amino-acid biosynthesis; D-alanine biosynthesis; D-alanine from L-alanine: step 1/1. Catalyzes the interconversion of L-alanine and D-alanine. May also act on other amino acids. The chain is Alanine racemase (alr) from Edwardsiella ictaluri (strain 93-146).